Reading from the N-terminus, the 92-residue chain is DLAAKLNALGEELRFVLLTSGANVADYAQAPADAWQSDLLKGLKVVLSKAEGEKCPRCWHYTSDVGKVAEHAEICGRCVSNVAGDGEQRKFA.

Zn(2+) contacts are provided by Cys55, Cys58, Cys75, and Cys78.

It belongs to the class-I aminoacyl-tRNA synthetase family. IleS type 1 subfamily. Monomer. Requires Zn(2+) as cofactor.

It is found in the cytoplasm. The enzyme catalyses tRNA(Ile) + L-isoleucine + ATP = L-isoleucyl-tRNA(Ile) + AMP + diphosphate. Functionally, catalyzes the attachment of isoleucine to tRNA(Ile). As IleRS can inadvertently accommodate and process structurally similar amino acids such as valine, to avoid such errors it has two additional distinct tRNA(Ile)-dependent editing activities. One activity is designated as 'pretransfer' editing and involves the hydrolysis of activated Val-AMP. The other activity is designated 'posttransfer' editing and involves deacylation of mischarged Val-tRNA(Ile). This is Isoleucine--tRNA ligase (ileS) from Klebsiella aerogenes (Enterobacter aerogenes).